The following is a 180-amino-acid chain: uncharacterized protein (180 aa).

The HTH dtxR-type domain occupies 17–80 (RRSRILHYLM…LIPNMGVRLT (64 aa)).

The protein belongs to the DtxR/MntR family.

This is an uncharacterized protein from Aeropyrum pernix (strain ATCC 700893 / DSM 11879 / JCM 9820 / NBRC 100138 / K1).